Reading from the N-terminus, the 485-residue chain is NADH-quinone oxidoreductase subunit N (485 aa).

14 helical membrane passes run 8–28 (LIAL…MLCI), 35–55 (FVNA…LYFV), 75–95 (FYTG…YPWL), 105–125 (FYLL…ANHL), 127–147 (SLFI…GYAF), 159–179 (YMLL…LIYA), 203–223 (LLAG…LVPF), 235–255 (PAPV…GAVM), 271–291 (IVLG…AVSQ), 297–317 (LLGY…IAVQ), 326–346 (VGVY…VVSL), 374–394 (AVMT…GFFG), 407–426 (LWWL…YYYL), and 449–469 (ALTA…FFGL).

The protein belongs to the complex I subunit 2 family. In terms of assembly, NDH-1 is composed of 13 different subunits. Subunits NuoA, H, J, K, L, M, N constitute the membrane sector of the complex.

The protein localises to the cell inner membrane. It catalyses the reaction a quinone + NADH + 5 H(+)(in) = a quinol + NAD(+) + 4 H(+)(out). NDH-1 shuttles electrons from NADH, via FMN and iron-sulfur (Fe-S) centers, to quinones in the respiratory chain. The immediate electron acceptor for the enzyme in this species is believed to be ubiquinone. Couples the redox reaction to proton translocation (for every two electrons transferred, four hydrogen ions are translocated across the cytoplasmic membrane), and thus conserves the redox energy in a proton gradient. This is NADH-quinone oxidoreductase subunit N from Pectobacterium carotovorum subsp. carotovorum (strain PC1).